The primary structure comprises 606 residues: NADH-ubiquinone oxidoreductase chain 5 (606 aa).

The next 16 membrane-spanning stretches (helical) occupy residues 4–24, 38–58, 87–107, 117–137, 140–160, 171–191, 211–233, 241–261, 273–293, 301–320, 325–347, 366–386, 413–433, 457–477, 488–508, and 584–604; these read FSSL…SSIL, NIIS…IHSG, MIFV…SLWY, FFKY…ANNL, LFIG…WWYG, AILY…WFLF, LPLL…HPWL, TPVS…FLLI, IQSL…ICAL, IIAF…IGIN, AFLH…GSII, MPFT…MPFL, LIAT…ALLG, LLIG…PTTI, LTAL…SLIT, and IKLY…LFNL.

Belongs to the complex I subunit 5 family. In terms of assembly, core subunit of respiratory chain NADH dehydrogenase (Complex I) which is composed of 45 different subunits.

It is found in the mitochondrion inner membrane. The enzyme catalyses a ubiquinone + NADH + 5 H(+)(in) = a ubiquinol + NAD(+) + 4 H(+)(out). Core subunit of the mitochondrial membrane respiratory chain NADH dehydrogenase (Complex I) which catalyzes electron transfer from NADH through the respiratory chain, using ubiquinone as an electron acceptor. Essential for the catalytic activity and assembly of complex I. The polypeptide is NADH-ubiquinone oxidoreductase chain 5 (MT-ND5) (Equus asinus (Donkey)).